Consider the following 451-residue polypeptide: DNA-directed RNA polymerase subunit Rpo1C (451 aa).

Positions 1–68 (MQDIIGKIED…DDDELLDAVE (68 aa)) are unknown. The DNA-directed RNA polymerase subunit Rpo1C stretch occupies residues 69-451 (DDYQRILKVQ…SVSVVMKERK (383 aa)).

Belongs to the RNA polymerase beta' chain family. As to quaternary structure, part of the RNA polymerase complex.

The protein localises to the cytoplasm. It carries out the reaction RNA(n) + a ribonucleoside 5'-triphosphate = RNA(n+1) + diphosphate. In terms of biological role, DNA-dependent RNA polymerase (RNAP) catalyzes the transcription of DNA into RNA using the four ribonucleoside triphosphates as substrates. Forms part of the jaw domain. The protein is DNA-directed RNA polymerase subunit Rpo1C of Methanothermobacter thermautotrophicus (strain ATCC 29096 / DSM 1053 / JCM 10044 / NBRC 100330 / Delta H) (Methanobacterium thermoautotrophicum).